Reading from the N-terminus, the 23-residue chain is Unknown protein 1 (23 aa).

The polypeptide is Unknown protein 1 (Coniferiporia sulphurascens (Laminated root rot fungus)).